We begin with the raw amino-acid sequence, 207 residues long: Large ribosomal subunit protein uL3 (207 aa).

The interval 119-143 is disordered; the sequence is GFQGSIKRNGQHRGPMAHGSRYHRR.

This sequence belongs to the universal ribosomal protein uL3 family. Part of the 50S ribosomal subunit. Forms a cluster with proteins L14 and L19.

Its function is as follows. One of the primary rRNA binding proteins, it binds directly near the 3'-end of the 23S rRNA, where it nucleates assembly of the 50S subunit. The chain is Large ribosomal subunit protein uL3 from Ligilactobacillus salivarius (strain UCC118) (Lactobacillus salivarius).